An 875-amino-acid chain; its full sequence is DNA gyrase subunit A (875 aa).

Residues 34–533 (LPDVRDGLKP…NSADINLEDL (500 aa)) enclose the Topo IIA-type catalytic domain. The O-(5'-phospho-DNA)-tyrosine intermediate role is filled by Y122. Residues 560–566 (QRRGGKG) carry the GyrA-box motif. Residues 841-875 (EPVDEEDLDTIDGSAAEGDDEIAPEVDVDDEPEEE) form a disordered region. A compositionally biased stretch (acidic residues) spans 857-875 (EGDDEIAPEVDVDDEPEEE).

This sequence belongs to the type II topoisomerase GyrA/ParC subunit family. In terms of assembly, heterotetramer, composed of two GyrA and two GyrB chains. In the heterotetramer, GyrA contains the active site tyrosine that forms a transient covalent intermediate with DNA, while GyrB binds cofactors and catalyzes ATP hydrolysis.

It localises to the cytoplasm. It carries out the reaction ATP-dependent breakage, passage and rejoining of double-stranded DNA.. Its function is as follows. A type II topoisomerase that negatively supercoils closed circular double-stranded (ds) DNA in an ATP-dependent manner to modulate DNA topology and maintain chromosomes in an underwound state. Negative supercoiling favors strand separation, and DNA replication, transcription, recombination and repair, all of which involve strand separation. Also able to catalyze the interconversion of other topological isomers of dsDNA rings, including catenanes and knotted rings. Type II topoisomerases break and join 2 DNA strands simultaneously in an ATP-dependent manner. The chain is DNA gyrase subunit A from Shigella flexneri.